A 467-amino-acid polypeptide reads, in one-letter code: UDP-N-acetylmuramate--L-alanine ligase (467 aa).

Residue 114 to 120 (GTHGKTT) participates in ATP binding.

Belongs to the MurCDEF family.

The protein localises to the cytoplasm. It carries out the reaction UDP-N-acetyl-alpha-D-muramate + L-alanine + ATP = UDP-N-acetyl-alpha-D-muramoyl-L-alanine + ADP + phosphate + H(+). The protein operates within cell wall biogenesis; peptidoglycan biosynthesis. Its function is as follows. Cell wall formation. The sequence is that of UDP-N-acetylmuramate--L-alanine ligase from Chlorobium chlorochromatii (strain CaD3).